The primary structure comprises 195 residues: dITP/XTP pyrophosphatase (195 aa).

Residue 8–13 participates in substrate binding; it reads SNNQGK. Glu39 and Asp68 together coordinate Mg(2+). Asp68 acts as the Proton acceptor in catalysis. Substrate contacts are provided by residues Ser69, 149–152, Lys172, and 177–178; these read FGYD and HR.

The protein belongs to the HAM1 NTPase family. In terms of assembly, homodimer. The cofactor is Mg(2+).

It carries out the reaction XTP + H2O = XMP + diphosphate + H(+). The catalysed reaction is dITP + H2O = dIMP + diphosphate + H(+). It catalyses the reaction ITP + H2O = IMP + diphosphate + H(+). In terms of biological role, pyrophosphatase that catalyzes the hydrolysis of nucleoside triphosphates to their monophosphate derivatives, with a high preference for the non-canonical purine nucleotides XTP (xanthosine triphosphate), dITP (deoxyinosine triphosphate) and ITP. Seems to function as a house-cleaning enzyme that removes non-canonical purine nucleotides from the nucleotide pool, thus preventing their incorporation into DNA/RNA and avoiding chromosomal lesions. In Staphylococcus aureus (strain MRSA252), this protein is dITP/XTP pyrophosphatase.